Reading from the N-terminus, the 131-residue chain is Small ribosomal subunit protein uS8 (131 aa).

Belongs to the universal ribosomal protein uS8 family. In terms of assembly, part of the 30S ribosomal subunit. Contacts proteins S5 and S12.

One of the primary rRNA binding proteins, it binds directly to 16S rRNA central domain where it helps coordinate assembly of the platform of the 30S subunit. This chain is Small ribosomal subunit protein uS8, found in Helicobacter acinonychis (strain Sheeba).